The sequence spans 65 residues: Large ribosomal subunit protein bL35 (65 aa).

It belongs to the bacterial ribosomal protein bL35 family.

This Parasynechococcus marenigrum (strain WH8102) protein is Large ribosomal subunit protein bL35.